The following is a 402-amino-acid chain: Flavohemoprotein (402 aa).

In terms of domain architecture, Globin spans 1 to 136 (MLSAKTIEIV…IADAFISIEA (136 aa)). His-85 provides a ligand contact to heme b. Active-site charge relay system residues include Tyr-95 and Glu-135. Residues 147–402 (GGWKDFRNFV…EFFGPATSLQ (256 aa)) are reductase. Residues 150-260 (KDFRNFVIVK…SAPAGDFVLN (111 aa)) form the FAD-binding FR-type domain. FAD is bound by residues Tyr-188 and 204–207 (RQYS). Position 273–278 (273–278 (GVGITP)) interacts with NADP(+). 394–397 (FFGP) contacts FAD.

The protein belongs to the globin family. Two-domain flavohemoproteins subfamily. It in the C-terminal section; belongs to the flavoprotein pyridine nucleotide cytochrome reductase family. It depends on heme b as a cofactor. The cofactor is FAD.

It catalyses the reaction 2 nitric oxide + NADPH + 2 O2 = 2 nitrate + NADP(+) + H(+). The catalysed reaction is 2 nitric oxide + NADH + 2 O2 = 2 nitrate + NAD(+) + H(+). In terms of biological role, is involved in NO detoxification in an aerobic process, termed nitric oxide dioxygenase (NOD) reaction that utilizes O(2) and NAD(P)H to convert NO to nitrate, which protects the bacterium from various noxious nitrogen compounds. Therefore, plays a central role in the inducible response to nitrosative stress. The sequence is that of Flavohemoprotein from Bacillus cereus (strain ATCC 14579 / DSM 31 / CCUG 7414 / JCM 2152 / NBRC 15305 / NCIMB 9373 / NCTC 2599 / NRRL B-3711).